Here is a 238-residue protein sequence, read N- to C-terminus: tRNA (guanine-N(7)-)-methyltransferase (238 aa).

Polar residues predominate over residues 1–12 (MTDTAENQTPND). Residues 1-20 (MTDTAENQTPNDRQAGHPRS) form a disordered region. S-adenosyl-L-methionine contacts are provided by Glu70, Asp95, Asp122, and Asp145. The active site involves Asp145. Residues Lys149, Asp181, and 216–219 (TKFE) each bind substrate.

The protein belongs to the class I-like SAM-binding methyltransferase superfamily. TrmB family.

It carries out the reaction guanosine(46) in tRNA + S-adenosyl-L-methionine = N(7)-methylguanosine(46) in tRNA + S-adenosyl-L-homocysteine. The protein operates within tRNA modification; N(7)-methylguanine-tRNA biosynthesis. Functionally, catalyzes the formation of N(7)-methylguanine at position 46 (m7G46) in tRNA. The chain is tRNA (guanine-N(7)-)-methyltransferase from Neisseria meningitidis serogroup C (strain 053442).